Consider the following 693-residue polypeptide: Elongation factor G (693 aa).

The region spanning 8–282 (EKTRNIGIMA…AVLDYLPSPL (275 aa)) is the tr-type G domain. Residues 17-24 (AHVDAGKT), 81-85 (DTPGH), and 135-138 (NKMD) each bind GTP.

It belongs to the TRAFAC class translation factor GTPase superfamily. Classic translation factor GTPase family. EF-G/EF-2 subfamily.

It localises to the cytoplasm. Functionally, catalyzes the GTP-dependent ribosomal translocation step during translation elongation. During this step, the ribosome changes from the pre-translocational (PRE) to the post-translocational (POST) state as the newly formed A-site-bound peptidyl-tRNA and P-site-bound deacylated tRNA move to the P and E sites, respectively. Catalyzes the coordinated movement of the two tRNA molecules, the mRNA and conformational changes in the ribosome. The protein is Elongation factor G of Enterococcus faecalis (strain ATCC 700802 / V583).